The following is a 465-amino-acid chain: MNAQLTMEAIGELHGVSHEPVPAPADLLGGSPHARSSVAHRGSHLPPAHPRSMGMASLLDGGSGGGDYHHHHRAPEHSLAGPLHPTMTMACETPPGMSMPTTYTTLTPLQPLPPISTVSDKFPHHHHHHHHHHHPHHHQRLAGNVSGSFTLMRDERGLASMNNLYTPYHKDVAGMGQSLSPLSSSGLGSIHNSQQGLPHYAHPGAAMPTDKMLTPNGFEAHHPAMLGRHGEQHLTPTSAGMVPINGLPPHHPHAHLNAQGHGQLLGTAREPNPSVTGAQVSNGSNSGQMEEINTKEVAQRITTELKRYSIPQAIFAQRVLCRSQGTLSDLLRNPKPWSKLKSGRETFRRMWKWLQEPEFQRMSALRLAACKRKEQEHGKDRGNTPKKPRLVFTDVQRRTLHAIFKENKRPSKELQITISQQLGLELSTVSNFFMNARRRSLDKWQDEGSSNSGNSSSSSSTCTKA.

4 disordered regions span residues 17–55 (SHEP…SMGM), 120–141 (DKFP…HQRL), 264–290 (LLGT…GQME), and 442–465 (DKWQ…CTKA). The segment covering 123–140 (PHHHHHHHHHHHPHHHQR) has biased composition (basic residues). The segment covering 273–288 (PSVTGAQVSNGSNSGQ) has biased composition (polar residues). The CUT DNA-binding region spans 283 to 369 (GSNSGQMEEI…QRMSALRLAA (87 aa)). Positions 385–444 (PKKPRLVFTDVQRRTLHAIFKENKRPSKELQITISQQLGLELSTVSNFFMNARRRSLDKW) form a DNA-binding region, homeobox. Residues 448–465 (GSSNSGNSSSSSSTCTKA) show a composition bias toward low complexity.

This sequence belongs to the CUT homeobox family. In terms of assembly, binds DNA as a monomer. Highly expressed in liver; lower expression in testis and skin.

The protein resides in the nucleus. In terms of biological role, transcriptional activator. Binds the consensus sequence 5'-DHWATTGAYTWWD-3' on a variety of gene promoters such as those of HNF3B and TTR. Important for liver genes transcription. This Homo sapiens (Human) protein is Hepatocyte nuclear factor 6 (ONECUT1).